A 291-amino-acid polypeptide reads, in one-letter code: 4-hydroxy-tetrahydrodipicolinate synthase (291 aa).

Thr-47 is a binding site for pyruvate. Tyr-134 (proton donor/acceptor) is an active-site residue. The Schiff-base intermediate with substrate role is filled by Lys-162. Ile-205 contacts pyruvate.

It belongs to the DapA family. Homotetramer; dimer of dimers.

The protein resides in the cytoplasm. It carries out the reaction L-aspartate 4-semialdehyde + pyruvate = (2S,4S)-4-hydroxy-2,3,4,5-tetrahydrodipicolinate + H2O + H(+). The protein operates within amino-acid biosynthesis; L-lysine biosynthesis via DAP pathway; (S)-tetrahydrodipicolinate from L-aspartate: step 3/4. Its function is as follows. Catalyzes the condensation of (S)-aspartate-beta-semialdehyde [(S)-ASA] and pyruvate to 4-hydroxy-tetrahydrodipicolinate (HTPA). The chain is 4-hydroxy-tetrahydrodipicolinate synthase from Methanospirillum hungatei JF-1 (strain ATCC 27890 / DSM 864 / NBRC 100397 / JF-1).